We begin with the raw amino-acid sequence, 115 residues long: NADH-ubiquinone oxidoreductase chain 3 (115 aa).

A run of 3 helical transmembrane segments spans residues 3-23 (LMLA…IMFW), 55-75 (FFLV…LLSL), and 84-104 (LPTM…SLAY).

Belongs to the complex I subunit 3 family. As to quaternary structure, core subunit of respiratory chain NADH dehydrogenase (Complex I) which is composed of 45 different subunits. Interacts with TMEM186. Interacts with TMEM242.

The protein resides in the mitochondrion inner membrane. The catalysed reaction is a ubiquinone + NADH + 5 H(+)(in) = a ubiquinol + NAD(+) + 4 H(+)(out). Its function is as follows. Core subunit of the mitochondrial membrane respiratory chain NADH dehydrogenase (Complex I) which catalyzes electron transfer from NADH through the respiratory chain, using ubiquinone as an electron acceptor. Essential for the catalytic activity of complex I. This chain is NADH-ubiquinone oxidoreductase chain 3, found in Papio hamadryas (Hamadryas baboon).